The sequence spans 269 residues: Chromosome-partitioning protein Spo0J (269 aa).

The tract at residues 1–20 (MSRKPSGLGRGLEALLPKTG) is stimulates ATPase activity of Soj by 8%. A DNA-binding region (H-T-H motif) is located at residues 137–156 (QEEVARRVGKARSTVANALR). The required for DNA-binding; may be responsible for dimerization stretch occupies residues 223-269 (PSPLSLELSRHLGLPVRVVGGKKGKVVIQYRSLEELEALLRRLGYQA).

Belongs to the ParB family. Homodimer, probably via the C-terminal 46 residues. Dimerization of the N-terminal H-T-H region may require DNA-binding. Probably interacts with ATPase Soj.

Functionally, probably involved in chromosome partitioning. Binds to a plasmid centromere-like site parS. Stimulates the ATPase activity 10-fold of Soj; the first 20 residues may be responsible. This chain is Chromosome-partitioning protein Spo0J (spo0C), found in Thermus thermophilus (strain ATCC BAA-163 / DSM 7039 / HB27).